The chain runs to 214 residues: UPF0301 protein blr1492 (214 aa).

The interval methionine 1–serine 22 is disordered.

The protein belongs to the UPF0301 (AlgH) family.

The sequence is that of UPF0301 protein blr1492 from Bradyrhizobium diazoefficiens (strain JCM 10833 / BCRC 13528 / IAM 13628 / NBRC 14792 / USDA 110).